A 170-amino-acid polypeptide reads, in one-letter code: Lipoprotein signal peptidase (170 aa).

3 helical membrane passes run 5–25 (IVGV…KAYA), 62–82 (SNLI…VLFV), and 89–111 (STIC…LRFG). Catalysis depends on residues Asp-115 and Asp-133. A helical transmembrane segment spans residues 126 to 146 (WPAFNFADVCVTCGVICFLCL).

The protein belongs to the peptidase A8 family.

Its subcellular location is the cell inner membrane. It catalyses the reaction Release of signal peptides from bacterial membrane prolipoproteins. Hydrolyzes -Xaa-Yaa-Zaa-|-(S,diacylglyceryl)Cys-, in which Xaa is hydrophobic (preferably Leu), and Yaa (Ala or Ser) and Zaa (Gly or Ala) have small, neutral side chains.. It participates in protein modification; lipoprotein biosynthesis (signal peptide cleavage). This protein specifically catalyzes the removal of signal peptides from prolipoproteins. The polypeptide is Lipoprotein signal peptidase (Anaplasma marginale (strain Florida)).